Consider the following 456-residue polypeptide: MNSNPKKKFLKLIKIKSDIILLIPIFLFLVCCKSGDFSLLSSPINREKNGTEIVKFSIHPYKGTVIRLGEEILPFKVLEMDKNIALVEMAIPVYKDEKEIELKLSSPGFQNSSYRIRKPEELNEKLIALDKEGITHRFISRFKTGFQPKSVRFIDNTRLAIPLLEDEGMDVLDINSGQTVRLSPPEKYKKKLGFVETISIPEHNELWVSQMQANAVHVFDLKTLAYKATVDLTGKWSKILLYDPIRDLVYCSNWISEDISVIDRKTKLEIRKTDKIGLPRGLLLSKDGKELYIAQFSASNQESGGGRLGIYSMDKEKLIDTIGPPGNKRHIVSGNTENKIYVSDMCCSKIEVYDLKEKKVQKSIPVFDKPNTIALSPDGKYLYVSCRGPNHPTEGYLKKGLVLGKVYVIDTTTDTVKEFWEAGNQPTGLDVSPDNRYLVISDFLDHQIRVYRRDGF.

A signal peptide spans M1–S34. C346 and C347 form a disulfide bridge.

It is found in the cell outer membrane. Its function is as follows. May be involved in virulence. Binds human plasminogen (PLG) and stimulates its proteolytic cleavage to enzymatically active plasmin in the presence of an urokinase-type PLG activator in vitro. Activated plasmin has proteolytic activity which may help the bacteria to spread throughout the host by degrading extracellular matrix components, facilitating tissue penetration and invasion. The protein is Antigen Lp49 of Leptospira interrogans serogroup Icterohaemorrhagiae serovar copenhageni (strain Fiocruz L1-130).